Consider the following 425-residue polypeptide: Adenylosuccinate synthetase (425 aa).

Residues 12-18 (GDEGKGK) and 40-42 (GHT) each bind GTP. Catalysis depends on aspartate 13, which acts as the Proton acceptor. Aspartate 13 and glycine 40 together coordinate Mg(2+). Residues 13–16 (DEGK), 38–41 (NAGH), threonine 127, arginine 141, glutamine 222, threonine 237, and arginine 301 each bind IMP. Histidine 41 (proton donor) is an active-site residue. Position 297–303 (297–303 (AVTGRPR)) interacts with substrate. GTP contacts are provided by residues arginine 303, 329 to 331 (KID), and 411 to 413 (SVG).

This sequence belongs to the adenylosuccinate synthetase family. As to quaternary structure, homodimer. Requires Mg(2+) as cofactor.

It is found in the cytoplasm. It catalyses the reaction IMP + L-aspartate + GTP = N(6)-(1,2-dicarboxyethyl)-AMP + GDP + phosphate + 2 H(+). Its pathway is purine metabolism; AMP biosynthesis via de novo pathway; AMP from IMP: step 1/2. In terms of biological role, plays an important role in the de novo pathway of purine nucleotide biosynthesis. Catalyzes the first committed step in the biosynthesis of AMP from IMP. The polypeptide is Adenylosuccinate synthetase (Fusobacterium nucleatum subsp. nucleatum (strain ATCC 25586 / DSM 15643 / BCRC 10681 / CIP 101130 / JCM 8532 / KCTC 2640 / LMG 13131 / VPI 4355)).